An 83-amino-acid chain; its full sequence is Mitochondrial import inner membrane translocase subunit Tim8 B (83 aa).

A2 is modified (N-acetylalanine). The Twin CX3C motif motif lies at 36-59 (CWDKCVEKPGSRLDSRTENCLSSC). Disulfide bonds link C36-C59 and C40-C55.

Belongs to the small Tim family. As to quaternary structure, heterohexamer; possibly composed of 3 copies of TIMM8B and 3 copies of TIMM13, named soluble 70 kDa complex. Associates with the TIM22 complex, whose core is composed of TIMM22.

Its subcellular location is the mitochondrion inner membrane. Probable mitochondrial intermembrane chaperone that participates in the import and insertion of some multi-pass transmembrane proteins into the mitochondrial inner membrane. Also required for the transfer of beta-barrel precursors from the TOM complex to the sorting and assembly machinery (SAM complex) of the outer membrane. Acts as a chaperone-like protein that protects the hydrophobic precursors from aggregation and guide them through the mitochondrial intermembrane space. This is Mitochondrial import inner membrane translocase subunit Tim8 B (Timm8b) from Mus musculus (Mouse).